Here is a 1375-residue protein sequence, read N- to C-terminus: DNA-directed RNA polymerase subunit beta (1375 aa).

Belongs to the RNA polymerase beta chain family. In terms of assembly, the RNAP catalytic core consists of 2 alpha, 1 beta, 1 beta' and 1 omega subunit. When a sigma factor is associated with the core the holoenzyme is formed, which can initiate transcription.

It catalyses the reaction RNA(n) + a ribonucleoside 5'-triphosphate = RNA(n+1) + diphosphate. In terms of biological role, DNA-dependent RNA polymerase catalyzes the transcription of DNA into RNA using the four ribonucleoside triphosphates as substrates. This is DNA-directed RNA polymerase subunit beta from Coxiella burnetii (strain CbuG_Q212) (Coxiella burnetii (strain Q212)).